Consider the following 532-residue polypeptide: Bifunctional purine biosynthesis protein PurH (532 aa).

The MGS-like domain occupies 1–147 (MADRPIRQAL…KNHKDVAIVV (147 aa)).

It belongs to the PurH family.

It carries out the reaction (6R)-10-formyltetrahydrofolate + 5-amino-1-(5-phospho-beta-D-ribosyl)imidazole-4-carboxamide = 5-formamido-1-(5-phospho-D-ribosyl)imidazole-4-carboxamide + (6S)-5,6,7,8-tetrahydrofolate. It catalyses the reaction IMP + H2O = 5-formamido-1-(5-phospho-D-ribosyl)imidazole-4-carboxamide. The protein operates within purine metabolism; IMP biosynthesis via de novo pathway; 5-formamido-1-(5-phospho-D-ribosyl)imidazole-4-carboxamide from 5-amino-1-(5-phospho-D-ribosyl)imidazole-4-carboxamide (10-formyl THF route): step 1/1. It functions in the pathway purine metabolism; IMP biosynthesis via de novo pathway; IMP from 5-formamido-1-(5-phospho-D-ribosyl)imidazole-4-carboxamide: step 1/1. In Haemophilus influenzae (strain ATCC 51907 / DSM 11121 / KW20 / Rd), this protein is Bifunctional purine biosynthesis protein PurH.